The following is a 155-amino-acid chain: Glutaredoxin-related protein 5, mitochondrial (155 aa).

A mitochondrion-targeting transit peptide spans 1 to 14 (MNSVFRSTARCLRS). Residues 42-145 (QKNLEEMVKK…EELQKLGIRS (104 aa)) form the Glutaredoxin domain. K59 contacts glutathione. Residue C67 participates in [2Fe-2S] cluster binding. Glutathione is bound by residues 97–101 (RQGIK), I109, and 122–123 (CD).

As to quaternary structure, homodimer.

Its subcellular location is the mitochondrion. Its function is as follows. Monothiol glutaredoxin involved in mitochondrial iron-sulfur (Fe/S) cluster transfer. Receives iron-sulfur clusters from scaffold protein ISCU and mediates their transfer to apoproteins, to the 4Fe/FS cluster biosynthesis machinery, or export from mitochondrion. Required for normal hemoglobin biosynthesis. The chain is Glutaredoxin-related protein 5, mitochondrial (glrx5) from Danio rerio (Zebrafish).